The sequence spans 313 residues: CRISPR-associated endonuclease Cas1 1 (313 aa).

Residues Glu-144, His-211, and Asp-224 each coordinate Mn(2+). The disordered stretch occupies residues 288 to 313 (PPLDAPEAVDPVIPPEEPSGDDGHRG).

The protein belongs to the CRISPR-associated endonuclease Cas1 family. As to quaternary structure, homodimer, forms a heterotetramer with a Cas2 homodimer. Mg(2+) serves as cofactor. It depends on Mn(2+) as a cofactor.

Functionally, CRISPR (clustered regularly interspaced short palindromic repeat), is an adaptive immune system that provides protection against mobile genetic elements (viruses, transposable elements and conjugative plasmids). CRISPR clusters contain spacers, sequences complementary to antecedent mobile elements, and target invading nucleic acids. CRISPR clusters are transcribed and processed into CRISPR RNA (crRNA). Acts as a dsDNA endonuclease. Involved in the integration of spacer DNA into the CRISPR cassette. This chain is CRISPR-associated endonuclease Cas1 1, found in Rhodospirillum rubrum (strain ATCC 11170 / ATH 1.1.1 / DSM 467 / LMG 4362 / NCIMB 8255 / S1).